Consider the following 255-residue polypeptide: Geranylgeranylglyceryl phosphate synthase (255 aa).

The Mg(2+) site is built by Asp34 and Thr64. Sn-glycerol 1-phosphate is bound by residues 182-188 (YLEAGSG), 213-214 (GG), and 235-236 (GN).

It belongs to the GGGP/HepGP synthase family. Group II subfamily. The cofactor is Mg(2+).

It is found in the cytoplasm. It catalyses the reaction sn-glycerol 1-phosphate + (2E,6E,10E)-geranylgeranyl diphosphate = sn-3-O-(geranylgeranyl)glycerol 1-phosphate + diphosphate. Its pathway is membrane lipid metabolism; glycerophospholipid metabolism. Its function is as follows. Prenyltransferase that catalyzes the transfer of the geranylgeranyl moiety of geranylgeranyl diphosphate (GGPP) to the C3 hydroxyl of sn-glycerol-1-phosphate (G1P). This reaction is the first ether-bond-formation step in the biosynthesis of archaeal membrane lipids. The chain is Geranylgeranylglyceryl phosphate synthase from Saccharolobus solfataricus (strain ATCC 35092 / DSM 1617 / JCM 11322 / P2) (Sulfolobus solfataricus).